We begin with the raw amino-acid sequence, 456 residues long: Dothistromin biosynthesis regulatory protein aflJ (456 aa).

Residues 74–143 form the HTH iclR-type domain; it reads LARENQLLAC…PKPGYVAHSG (70 aa). The segment at residues 104-123 is a DNA-binding region (H-T-H motif); sequence YSDVADLACVPVDQLRRIAR. The span at 290–300 shows a compositional bias: polar residues; it reads KLHNGLSTPPE. Residues 290-314 form a disordered region; the sequence is KLHNGLSTPPESDTGPAARAAKASE.

Its subcellular location is the nucleus. Functionally, transcription coactivator involved in regulation of the dothistromin biosynthesis gene cluster with aflR. The polypeptide is Dothistromin biosynthesis regulatory protein aflJ (Dothistroma septosporum (strain NZE10 / CBS 128990) (Red band needle blight fungus)).